A 133-amino-acid chain; its full sequence is MTDEQIYAFCDANKDDIRCKCIYPDKSIVRIGIDTRLPYYCWYEPCKRSDALLPASLKKNISRCNVSDCTISLGNVSITDSKLDVNNVCDSKRVATENIAVRYLNQEIRYPIIDIKWLPIGLLALAILILAFF.

Topologically, residues 1–111 (MTDEQIYAFC…RYLNQEIRYP (111 aa)) are virion surface. A helical; Signal-anchor membrane pass occupies residues 112-132 (IIDIKWLPIGLLALAILILAF).

Belongs to the orthopoxvirus OPG104 family. In terms of assembly, part of a stable entry-fusion complex (EFC) which is at least composed of proteins OPG143, OPG147, OPG155, OPG086, OPG094, OPG107, OPG104, and OPG099. Formation of the viral membrane is necessary for the assembly of the complex.

The protein localises to the virion membrane. Envelope protein part of the entry-fusion complex responsible for the virus membrane fusion with host cell membrane during virus entry. Also plays a role in cell-cell fusion (syncytium formation). In Variola virus (isolate Human/India/Ind3/1967) (VARV), this protein is Protein OPG104 (OPG104).